Here is a 335-residue protein sequence, read N- to C-terminus: Nucleoid-associated protein YejK (335 aa).

It belongs to the YejK family.

Its subcellular location is the cytoplasm. The protein localises to the nucleoid. This Shigella sonnei (strain Ss046) protein is Nucleoid-associated protein YejK.